A 562-amino-acid chain; its full sequence is Probable Xaa-Pro aminopeptidase PEPP (562 aa).

Asp-358, Asp-369, Glu-492, and Glu-532 together coordinate Mn(2+).

Belongs to the peptidase M24B family. Mn(2+) serves as cofactor.

The enzyme catalyses Release of any N-terminal amino acid, including proline, that is linked to proline, even from a dipeptide or tripeptide.. Functionally, catalyzes the removal of a penultimate prolyl residue from the N-termini of peptides. The polypeptide is Probable Xaa-Pro aminopeptidase PEPP (PEPP) (Leptosphaeria maculans (strain JN3 / isolate v23.1.3 / race Av1-4-5-6-7-8) (Blackleg fungus)).